The primary structure comprises 808 residues: Protein Ac66 (808 aa).

Residues 132–141 are compositionally biased toward pro residues; that stretch reads PFSTPPPTQP. Residues 132–151 are disordered; the sequence is PFSTPPPTQPPESNVAGVGG.

Interacts with the putative E3 ligase IE0 and with viral ubiquitin/vUbi.

It is found in the host nucleus. It localises to the host cytoplasm. Plays an essential role in the efficient egress of nucleocapsids from the host nucleus to the cytoplasm. The sequence is that of Protein Ac66 (Ac66) from Lepidoptera (butterflies and moths).